The chain runs to 81 residues: ATP synthase subunit c (81 aa).

Transmembrane regions (helical) follow at residues 6–26 (AAASVIAAALAVGLAAIGPGI) and 57–77 (LAFMEALTIYGLVVALVLLFA).

It belongs to the ATPase C chain family. In terms of assembly, F-type ATPases have 2 components, F(1) - the catalytic core - and F(0) - the membrane proton channel. F(1) has five subunits: alpha(3), beta(3), gamma(1), delta(1), epsilon(1). F(0) has four main subunits: a(1), b(1), b'(1) and c(10-14). The alpha and beta chains form an alternating ring which encloses part of the gamma chain. F(1) is attached to F(0) by a central stalk formed by the gamma and epsilon chains, while a peripheral stalk is formed by the delta, b and b' chains.

The protein resides in the cellular thylakoid membrane. In terms of biological role, f(1)F(0) ATP synthase produces ATP from ADP in the presence of a proton or sodium gradient. F-type ATPases consist of two structural domains, F(1) containing the extramembraneous catalytic core and F(0) containing the membrane proton channel, linked together by a central stalk and a peripheral stalk. During catalysis, ATP synthesis in the catalytic domain of F(1) is coupled via a rotary mechanism of the central stalk subunits to proton translocation. Key component of the F(0) channel; it plays a direct role in translocation across the membrane. A homomeric c-ring of between 10-14 subunits forms the central stalk rotor element with the F(1) delta and epsilon subunits. This Picosynechococcus sp. (strain ATCC 27264 / PCC 7002 / PR-6) (Agmenellum quadruplicatum) protein is ATP synthase subunit c.